Reading from the N-terminus, the 242-residue chain is GSLLGVLPGGGHVLASFASYSVEKNLSKNPAEFGHGAIEGVAGPESANNAAAQTSFIPLLTLGIPAHPVMALIVGAFILQGITPGPDVITSQPALFWGIIASMWIGNLLLVILNLPLIGLWVKMLTIPYRMLFPAIVIFASIGCYSINNNPFDVYAIIVSGILGYVLIRVGCEPAPLLLGFVLGPLLEEHLRRAMIISRGDATVFVTNPIAASLLGLGLVCVILALLPSIRSKRDQVFVEDD.

This is an uncharacterized protein from Agrobacterium vitis (Rhizobium vitis).